Consider the following 71-residue polypeptide: uncharacterized protein (71 aa).

Over residues 1 to 16 (MAKSQAKKKRGHRLRN) the composition is skewed to basic residues. Disordered stretches follow at residues 1–39 (MAKS…RMTK) and 51–71 (KNPY…QKAA). A compositionally biased stretch (polar residues) spans 25 to 35 (RGSTPSFSTHG). Basic and acidic residues predominate over residues 51–64 (KNPYDHTAVDDKDF).

This is an uncharacterized protein from Bacillus subtilis (strain 168).